Consider the following 118-residue polypeptide: Large ribosomal subunit protein bL20 (118 aa).

The protein belongs to the bacterial ribosomal protein bL20 family.

Functionally, binds directly to 23S ribosomal RNA and is necessary for the in vitro assembly process of the 50S ribosomal subunit. It is not involved in the protein synthesizing functions of that subunit. The chain is Large ribosomal subunit protein bL20 from Francisella tularensis subsp. novicida (strain U112).